The following is a 64-amino-acid chain: U6-theraphotoxin-Cg1a (64 aa).

The signal sequence occupies residues 1–20 (MTRKILAVLLVFTLVACNNA). A propeptide spanning residues 21–38 (EKYSETDVEDSPMIQERR) is cleaved from the precursor. 3 cysteine pairs are disulfide-bonded: C39–C55, C46–C58, and C54–C63.

It belongs to the neurotoxin 36 family. 02 subfamily. As to expression, expressed by the venom gland.

The protein resides in the secreted. Functionally, probable ion channel inhibitor. In Chilobrachys guangxiensis (Chinese earth tiger tarantula), this protein is U6-theraphotoxin-Cg1a.